Reading from the N-terminus, the 1040-residue chain is Multidrug resistance protein MdtB (1040 aa).

12 consecutive transmembrane segments (helical) span residues phenylalanine 16 to isoleucine 36, leucine 347 to alanine 367, isoleucine 369 to leucine 389, leucine 396 to isoleucine 416, isoleucine 440 to phenylalanine 460, phenylalanine 472 to proline 492, tryptophan 537 to isoleucine 557, leucine 863 to isoleucine 883, phenylalanine 888 to alanine 908, isoleucine 911 to valine 931, isoleucine 968 to valine 988, and isoleucine 998 to isoleucine 1018.

The protein belongs to the resistance-nodulation-cell division (RND) (TC 2.A.6) family. MdtB subfamily. In terms of assembly, part of a tripartite efflux system composed of MdtA, MdtB and MdtC. MdtB forms a heteromultimer with MdtC.

The protein resides in the cell inner membrane. The chain is Multidrug resistance protein MdtB from Shigella sonnei (strain Ss046).